The sequence spans 1503 residues: Chromosome partition protein MukB (1503 aa).

Residues 1–19 (MMNTNELFDQTAVNSSQDK) show a composition bias toward polar residues. The segment at 1 to 21 (MMNTNELFDQTAVNSSQDKPL) is disordered. 65 to 72 (GGNGAGKS) is an ATP binding site. Coiled coils occupy residues 370–495 (MNAL…QRLS), 536–616 (DQKM…HRQQ), 662–697 (MQEM…SQAD), 865–1173 (EMLM…SAEE), and 1238–1293 (DAIE…LQNI). The segment at 696-813 (ADGAEDIRLN…EVPLFGRAAR (118 aa)) is flexible hinge.

Belongs to the SMC family. MukB subfamily. As to quaternary structure, homodimerization via its hinge domain. Binds to DNA via its C-terminal region. Interacts, and probably forms a ternary complex, with MukE and MukF via its C-terminal region. The complex formation is stimulated by calcium or magnesium. Interacts with tubulin-related protein FtsZ.

It localises to the cytoplasm. Its subcellular location is the nucleoid. Functionally, plays a central role in chromosome condensation, segregation and cell cycle progression. Functions as a homodimer, which is essential for chromosome partition. Involved in negative DNA supercoiling in vivo, and by this means organize and compact chromosomes. May achieve or facilitate chromosome segregation by condensation DNA from both sides of a centrally located replisome during cell division. The chain is Chromosome partition protein MukB from Haemophilus ducreyi (strain 35000HP / ATCC 700724).